The primary structure comprises 560 residues: MNIDVASLLHQNDILLLFVVLAVGLSFGKIRFAKMQVGNSIGVLLTAILFGNAGFTFNTEALNIGFMLFIFCVGIEAGPNFFGIFFRDGKHYLLLALVVLLSAIAITLAMTHYLGLDIGLATGLMAGSLTATPVLVGAKDALNSGLSGISDPDIIKQTIDSLSVGYAMSYLMGLISLIFLAKLMPKLQKQDLAESSQQIARERGIGEVGQRKVYLPIIRAYRVGPELINWIDSRNLRELGIYRQTGCYIERIRRNGILANPDGDAILQEGDEIALVGYPDSHARLDPSFRNGKEVFDRDLLDLRIVEEEIVVKNDNISGKRLSELNLSEYGCFLNRVVRAQIEMPMDHNILLNKGDILQVSGEKSRVLGLAERIGFISIHSQIADLLAFCCFFIIGLLIGSITLAFGHVAFGLGSAAGLLIAGITLGFLRANHPTFGYVPQGALNMAKDLGLMVFMVGIGLSAGSNLFDSFAHIGPMVLVTSLMVSVIPVVLAYLFGAYVLKMNRALLFGAIIGARTCAPAMDMINEHARSTIPALGYAGTYAIANVLLTIAGTLIIIMN.

The next 5 helical transmembrane spans lie at 5–25, 37–57, 66–86, 91–111, and 161–181; these read VASL…AVGL, VGNS…GFTF, FMLF…GIFF, HYLL…LAMT, and SLSV…IFLA. RCK C-terminal domains follow at residues 203-292 and 293-377; these read RGIG…FRNG and KEVF…IGFI. Transmembrane regions (helical) follow at residues 386–406, 409–429, 452–472, 477–497, 506–526, and 539–559; these read LLAF…TLAF, VAFG…LGFL, LMVF…DSFA, MVLV…YLFG, ALLF…DMIN, and AGTY…IIIM.

The protein belongs to the AAE transporter (TC 2.A.81) family. YbjL subfamily.

It is found in the cell membrane. The polypeptide is Putative transport protein PBPRA2420 (Photobacterium profundum (strain SS9)).